The chain runs to 317 residues: tRNA uridine(34) hydroxylase (317 aa).

The 95-residue stretch at 129-223 (TDPEVLLIDT…YLEEVPEQES (95 aa)) folds into the Rhodanese domain. The active-site Cysteine persulfide intermediate is cysteine 183. The interval 298 to 317 (AKARNQPHPIGRNYRLPSEA) is disordered.

Belongs to the TrhO family.

It carries out the reaction uridine(34) in tRNA + AH2 + O2 = 5-hydroxyuridine(34) in tRNA + A + H2O. Its function is as follows. Catalyzes oxygen-dependent 5-hydroxyuridine (ho5U) modification at position 34 in tRNAs. The chain is tRNA uridine(34) hydroxylase from Pseudomonas syringae pv. tomato (strain ATCC BAA-871 / DC3000).